We begin with the raw amino-acid sequence, 144 residues long: MFSKVNNQKMLEDCFYIRKKVFVEEQGVPEESEIDEYESESIHLIGYDNGQPVATARIRPINETTVKIERVAVMKSHRGQGMGRMLMQAVESLAKDEGFYVATMNAQCHAIPFYESLNFKMRGNIFLEEGIEHIEMTKKLTSLN.

Residues 1-141 form the N-acetyltransferase domain; the sequence is MFSKVNNQKM…EHIEMTKKLT (141 aa). Residues 71–73, Gly79, and 112–114 contribute to the CoA site; these read VAV and PFY.

Belongs to the UPF0039 (ElaA) family.

Its function is as follows. Could catalyze the transfer of an acetyl group from acetyl coenzyme A (AcCoA) to an acceptor substrate and release both CoA and the acetylated product. The chain is Putative acetyltransferase SAOUHSC_00995 from Staphylococcus aureus (strain NCTC 8325 / PS 47).